The following is a 187-amino-acid chain: ADP-ribosylation factor-like protein 9 (187 aa).

Residues 25 to 32 (GLDGAGKT), 69 to 73 (EIGGS), and 126 to 129 (NKQD) each bind GTP.

This sequence belongs to the small GTPase superfamily. Arf family.

The chain is ADP-ribosylation factor-like protein 9 (ARL9) from Homo sapiens (Human).